A 367-amino-acid polypeptide reads, in one-letter code: Methylthioribose-1-phosphate isomerase (367 aa).

Catalysis depends on aspartate 250, which acts as the Proton donor.

Belongs to the eIF-2B alpha/beta/delta subunits family. MtnA subfamily.

Its subcellular location is the cytoplasm. It localises to the nucleus. The catalysed reaction is 5-(methylsulfanyl)-alpha-D-ribose 1-phosphate = 5-(methylsulfanyl)-D-ribulose 1-phosphate. Its pathway is amino-acid biosynthesis; L-methionine biosynthesis via salvage pathway; L-methionine from S-methyl-5-thio-alpha-D-ribose 1-phosphate: step 1/6. Catalyzes the interconversion of methylthioribose-1-phosphate (MTR-1-P) into methylthioribulose-1-phosphate (MTRu-1-P). The chain is Methylthioribose-1-phosphate isomerase (IDI2) from Zea mays (Maize).